The primary structure comprises 358 residues: S-adenosylmethionine decarboxylase proenzyme (358 aa).

Active-site residues include E11 and E14. The Schiff-base intermediate with substrate; via pyruvic acid role is filled by S71. Position 71 is a pyruvic acid (Ser); by autocatalysis (S71). C85 (proton donor; for catalytic activity) is an active-site residue. Catalysis depends on proton acceptor; for processing activity residues S234 and H247.

This sequence belongs to the eukaryotic AdoMetDC family. Pyruvate is required as a cofactor. Post-translationally, is synthesized initially as an inactive proenzyme. Formation of the active enzyme involves a self-maturation process in which the active site pyruvoyl group is generated from an internal serine residue via an autocatalytic post-translational modification. Two non-identical subunits are generated from the proenzyme in this reaction, and the pyruvate is formed at the N-terminus of the alpha chain, which is derived from the carboxyl end of the proenzyme. The post-translation cleavage follows an unusual pathway, termed non-hydrolytic serinolysis, in which the side chain hydroxyl group of the serine supplies its oxygen atom to form the C-terminus of the beta chain, while the remainder of the serine residue undergoes an oxidative deamination to produce ammonia and the pyruvoyl group blocking the N-terminus of the alpha chain.

The catalysed reaction is S-adenosyl-L-methionine + H(+) = S-adenosyl 3-(methylsulfanyl)propylamine + CO2. The protein operates within amine and polyamine biosynthesis; S-adenosylmethioninamine biosynthesis; S-adenosylmethioninamine from S-adenosyl-L-methionine: step 1/1. This is S-adenosylmethionine decarboxylase proenzyme (SAMDC) from Solanum chilense (Tomato).